The primary structure comprises 154 residues: UPF0225 protein Asuc_0343 (154 aa).

The protein belongs to the UPF0225 family.

The chain is UPF0225 protein Asuc_0343 from Actinobacillus succinogenes (strain ATCC 55618 / DSM 22257 / CCUG 43843 / 130Z).